Here is a 100-residue protein sequence, read N- to C-terminus: Urease subunit gamma (100 aa).

This sequence belongs to the urease gamma subunit family. Heterotrimer of UreA (gamma), UreB (beta) and UreC (alpha) subunits. Three heterotrimers associate to form the active enzyme. In terms of processing, although not discussed in the published references, Met-1 is represented in the submitted PDB entries as being modified by either a formyl, a carboxyl, or an acetyl group. The N-terminal is probably N-(dihydroxymethyl)methionine, the hydrated form of N-formylmethionine.

Its subcellular location is the cytoplasm. It carries out the reaction urea + 2 H2O + H(+) = hydrogencarbonate + 2 NH4(+). It functions in the pathway nitrogen metabolism; urea degradation; CO(2) and NH(3) from urea (urease route): step 1/1. In Sporosarcina pasteurii (Bacillus pasteurii), this protein is Urease subunit gamma.